The primary structure comprises 360 residues: Catabolic L-serine/threonine dehydratase (360 aa).

Ser-2 is subject to N-acetylserine. Position 37 is an N6-(pyridoxal phosphate)lysine (Lys-37).

It belongs to the serine/threonine dehydratase family. Requires pyridoxal 5'-phosphate as cofactor.

It is found in the mitochondrion. The enzyme catalyses L-serine = pyruvate + NH4(+). It carries out the reaction L-threonine = 2-oxobutanoate + NH4(+). In Saccharomyces cerevisiae (strain ATCC 204508 / S288c) (Baker's yeast), this protein is Catabolic L-serine/threonine dehydratase (CHA1).